The chain runs to 101 residues: MGKCLLLPLLLVVLSSLLGFPQALECFQCQRVSASGVCESGKSFCQTQGSQQCFLRKVYEGDTVSYGHQGCSSLCVPMKFFRPNVTVDFRCCHDSPFCNKF.

Residues 1-23 (MGKCLLLPLLLVVLSSLLGFPQA) form the signal peptide. The region spanning 24 to 101 (LECFQCQRVS…CHDSPFCNKF (78 aa)) is the UPAR/Ly6 domain. Intrachain disulfides connect cysteine 26-cysteine 53, cysteine 29-cysteine 38, cysteine 45-cysteine 71, cysteine 75-cysteine 91, and cysteine 92-cysteine 98. Asparagine 84 carries N-linked (GlcNAc...) asparagine glycosylation.

The protein resides in the secreted. The chain is Protein PIP-1 from Sus scrofa (Pig).